A 140-amino-acid chain; its full sequence is Perlin matrix protein (140 aa).

Positions 1 to 26 are cleaved as a signal peptide; that stretch reads MTCTLRLTVAALVLLGICHLSRPVAA.

This sequence belongs to the N16 matrix protein family. Heterooligomer; disulfide-linked. Pif97, Pif80, N16 and other proteins form a complex. Component of conchiolin, the organic matrix of nacre. Only expressed in the dorsal region of the mantle.

Its subcellular location is the secreted. The protein localises to the extracellular space. The protein resides in the extracellular matrix. Functionally, may be specifically involved in the formation of the nacreous layer. This Margaritifera margaritifera (Freshwater pearl mussel) protein is Perlin matrix protein.